The following is a 201-amino-acid chain: Phosphoprotein (201 aa).

Positions 1 to 70 (MATRPSSLVD…DQRTGREQLS (70 aa)) are disordered. 2 short sequence motifs (nuclear localization signal) span residues 29–36 (PRPRKIPR) and 181–193 (PPRIYPQLPSAPT).

Homomultimer; only active in its oligomeric state. Interacts with nucleoprotein/N. Interacts with matrix/M protein. Interacts with host TBK1. Interacts with polymerase L. Interacts with host HMGB1; this interaction is required to stabilize RNP on chromosomes. Post-translationally, phosphorylated by host PKC epsilon and casein kinase II.

The protein localises to the host nucleus. It is found in the host cytoplasm. In terms of biological role, essential component of the RNA polymerase transcription and replication complex. Acts as a scaffold which brings L in close proximity to the N-RNA complex. Plays a role in the segregation of the viral genome in host daughter cells during mitosis by interacting with host HMGB1, a host chromatin-remodeling DNA architectural protein, thereby stabilizing RNP on chromosomes. Interacts with host TBK1 and thus interferes with activation of cellular antiviral state. Inhibits cellular histone acetyltransferase activities. This is Phosphoprotein (P/X) from Bos taurus (Bovine).